The chain runs to 69 residues: Guanine nucleotide-binding protein G(I)/G(S)/G(O) subunit gamma-T2 (69 aa).

A disordered region spans residues 47-69 (DPLLKGIPEDKNPFKEKGGCMIS). Basic and acidic residues predominate over residues 53–69 (IPEDKNPFKEKGGCMIS). Position 66 is a cysteine methyl ester (Cys-66). Cys-66 carries the S-farnesyl cysteine lipid modification. Positions 67 to 69 (MIS) are cleaved as a propeptide — removed in mature form.

It belongs to the G protein gamma family. As to quaternary structure, g proteins are composed of 3 units, alpha, beta and gamma.

Its subcellular location is the cell membrane. Its function is as follows. Guanine nucleotide-binding proteins (G proteins) are involved as a modulator or transducer in various transmembrane signaling systems. The beta and gamma chains are required for the GTPase activity, for replacement of GDP by GTP, and for G protein-effector interaction. The polypeptide is Guanine nucleotide-binding protein G(I)/G(S)/G(O) subunit gamma-T2 (GNGT2) (Canis lupus familiaris (Dog)).